The sequence spans 2034 residues: Host cell factor 1 (2034 aa).

Ala-2 carries the post-translational modification N-acetylalanine. Position 6 is a phosphoserine (Ser-6). Kelch repeat units lie at residues Leu-44–Cys-89, Arg-93–His-140, Lys-148–Gly-194, Lys-217–Asn-265, and Lys-266–Thr-313. Glycyl lysine isopeptide (Lys-Gly) (interchain with G-Cter in ubiquitin) cross-links involve residues Lys-105, Lys-163, and Lys-244. Residue Lys-282 forms a Glycyl lysine isopeptide (Lys-Gly) (interchain with G-Cter in SUMO2) linkage. Lys-288 is modified (N6-acetyllysine). A Glycyl lysine isopeptide (Lys-Gly) (interchain with G-Cter in ubiquitin) cross-link involves residue Lys-363. One can recognise a Fibronectin type-III 1 domain in the interval Pro-366–Gly-469. The segment at Ala-407–Ala-434 is disordered. Ser-411 is modified (phosphoserine). Pro residues predominate over residues Thr-413–Pro-428. Positions Leu-500–Ala-550 are required for interaction with OGT. An omega-N-methylarginine mark is found at Arg-504 and Arg-524. Residues Ser-598, Ser-666, and Ser-669 each carry the phosphoserine modification. An interaction with SIN3A region spans residues Leu-610 to Leu-722. The tract at residues Ile-750 to Thr-902 is interaction with ZBTB17. An N6-acetyllysine modification is found at Lys-813. Positions Lys-813–Thr-912 are interaction with GABP2. HCF repeat repeat units follow at residues Thr-1010–Ala-1035, Val-1072–Asn-1097, and Gln-1101–Ser-1126. The HCF repeat 4; degenerate repeat unit spans residues Arg-1156–Thr-1182. Phosphoserine is present on residues Ser-1204 and Ser-1223. Disordered regions lie at residues Gly-1221–Thr-1241, Pro-1302–Thr-1374, Thr-1444–Ser-1477, and Arg-1491–Pro-1525. HCF repeat repeat units lie at residues Thr-1295–Gly-1320 and Gln-1323–Asn-1348. Residues Thr-1308 to Ser-1321 show a composition bias toward low complexity. The HCF repeat 7; degenerate repeat unit spans residues Gln-1358–Gly-1383. One copy of the HCF repeat 8 repeat lies at Gln-1423–Asn-1448. Positions Arg-1491–Pro-1501 are enriched in low complexity. Thr-1500 is subject to Phosphothreonine. The span at Val-1502 to Glu-1511 shows a compositional bias: pro residues. Phosphoserine is present on residues Ser-1506 and Ser-1516. The stretch at Ile-1693–Leu-1723 forms a coiled coil. Ser-1782 bears the Phosphoserine mark. 2 Fibronectin type-III domains span residues Leu-1808–Pro-1899 and Phe-1901–Asp-2017. Residues Lys-1818 and Lys-1819 each participate in a glycyl lysine isopeptide (Lys-Gly) (interchain with G-Cter in ubiquitin) cross-link. Ser-1849 bears the Phosphoserine mark. A disordered region spans residues Ala-2005–Met-2034. Lys-2016 carries the post-translational modification N6-acetyllysine.

In terms of assembly, composed predominantly of six polypeptides ranging from 110 to 150 kDa and a minor 300 kDa polypeptide. The majority of N- and C-terminal cleavage products remain tightly, albeit non-covalently, associated. Interacts with POU2F1, CREB3, ZBTB17, EGR2, E2F4, CREBZF, SP1, GABP2, Sin3 HDAC complex (SIN3A, HDAC1, HDAC2, SUDS3), SAP30, SIN3B and FHL2. Component of a MLL1 complex, composed of at least the core components KMT2A/MLL1, ASH2L, HCFC1, WDR5 and RBBP5, as well as the facultative components BACC1, CHD8, DPY30, E2F6, HCFC2, HSP70, INO80C, KANSL1, LAS1L, MAX, MCRS1, MEN1, MGA, KAT8, PELP1, PHF20, PRP31, RING2, RUVBL1, RUVBL2, SENP3, TAF1, TAF4, TAF6, TAF7, TAF9 and TEX10. Component of a THAP1/THAP3-HCFC1-OGT complex that is required for the regulation of the transcriptional activity of RRM1. Interacts directly with THAP3 (via its HBM). Interacts (via the Kelch-repeat domain) with THAP1 (via the HBM); the interaction recruits HCHC1 to the RRM1. Interacts with THAP7 and THAP11 (via the HMB). Interacts directly with OGT; the interaction, which requires the HCFC1 cleavage site domain, glycosylates and promotes the proteolytic processing of HCFC1, retains OGT in the nucleus and impacts the expression of herpes simplex virus immediate early viral genes. Component of the SET1 complex, at least composed of the catalytic subunit (SETD1A or SETD1B), WDR5, WDR82, RBBP5, ASH2L, CXXC1, HCFC1 and DPY30. Component of the NSL complex at least composed of MOF/KAT8, KANSL1, KANSL2, KANSL3, MCRS1, PHF20, OGT1/OGT, WDR5 and HCFC1. Component of a complex at least composed of ZNF335, HCFC1, CCAR2, EMSY, MKI67, RBBP5, ASH2L and WDR5; the complex is formed as a result of interactions between components of a nuclear receptor-mediated transcription complex and a histone methylation complex. Within the complex interacts with ZNF335. Interacts with TET2 and TET3. Interacts with HCFC1R1. Interacts with THAP11. Interacts (via Kelch domain) with KMT2E/MLL5 isoform 3 (via HBM motif). Interacts with E2F1. Accessory scaffold component of the polycomb repressive deubiquitinase (PR-DUB) complex, at least composed of BAP1, one of ASXL1, ASXL2 or (probably) ASXL3 and one of MBD5 or MBD6; the PR-DUB core associates with a number of accessory proteins, including FOXK1, FOXK2, KDM1B, HCFC1, YY1 and OGT. Interacts with YY1 (via Gly-rich region); the interaction is direct. Interacts with BAP1 (via HBM-like motif). Post-translationally, proteolytically cleaved at one or several PPCE--THET sites within the HCF repeats. Further cleavage of the primary N- and C-terminal chains results in a 'trimming' and accumulation of the smaller chains. Cleavage is promoted by O-glycosylation. In terms of processing, O-glycosylated. GlcNAcylation by OGT promotes proteolytic processing. Ubiquitinated. Lys-1818 and Lys-1819 are ubiquitinated both via 'Lys-48'- and 'Lys-63'-linked polyubiquitin chains. BAP1 mediated deubiquitination of 'Lys-48'-linked polyubiquitin chains; deubiquitination by BAP1 does not seem to stabilize the protein.

Its subcellular location is the cytoplasm. It is found in the nucleus. In terms of biological role, transcriptional coregulator. Serves as a scaffold protein, bridging interactions between transcription factors, including THAP11 and ZNF143, and transcriptional coregulators. Involved in control of the cell cycle. Also antagonizes transactivation by ZBTB17 and GABP2; represses ZBTB17 activation of the p15(INK4b) promoter and inhibits its ability to recruit p300. Coactivator for EGR2 and GABP2. Tethers the chromatin modifying Set1/Ash2 histone H3 'Lys-4' methyltransferase (H3K4me) and Sin3 histone deacetylase (HDAC) complexes (involved in the activation and repression of transcription, respectively) together. Component of a THAP1/THAP3-HCFC1-OGT complex that is required for the regulation of the transcriptional activity of RRM1. As part of the NSL complex it may be involved in acetylation of nucleosomal histone H4 on several lysine residues. Recruits KMT2E/MLL5 to E2F1 responsive promoters promoting transcriptional activation and thereby facilitates G1 to S phase transition. Modulates expression of homeobox protein PDX1, perhaps acting in concert with transcription factor E2F1, thereby regulating pancreatic beta-cell growth and glucose-stimulated insulin secretion. May negatively modulate transcriptional activity of FOXO3. The sequence is that of Host cell factor 1 from Rattus norvegicus (Rat).